A 61-amino-acid polypeptide reads, in one-letter code: Large ribosomal subunit protein uL30 (61 aa).

This sequence belongs to the universal ribosomal protein uL30 family. As to quaternary structure, part of the 50S ribosomal subunit.

The protein is Large ribosomal subunit protein uL30 of Chlorobium luteolum (strain DSM 273 / BCRC 81028 / 2530) (Pelodictyon luteolum).